Reading from the N-terminus, the 1072-residue chain is Carbamoyl phosphate synthase large chain (1072 aa).

A carboxyphosphate synthetic domain region spans residues 1–401; that stretch reads MPKRLDINTI…SLLKAVRSLE (401 aa). ATP is bound by residues arginine 129, arginine 169, glycine 175, glycine 176, lysine 208, isoleucine 210, glutamate 215, glycine 241, valine 242, histidine 243, glutamine 284, and glutamate 298. The 195-residue stretch at 133-327 folds into the ATP-grasp 1 domain; the sequence is RTLMQELNEP…IAKLAAKIAV (195 aa). 3 residues coordinate Mg(2+): glutamine 284, glutamate 298, and asparagine 300. Glutamine 284, glutamate 298, and asparagine 300 together coordinate Mn(2+). The tract at residues 402–546 is oligomerization domain; the sequence is LGVYHLELEH…YSTYGDENES (145 aa). The segment at 547–929 is carbamoyl phosphate synthetic domain; sequence VRTDRKSVVV…ALYKGLVASG (383 aa). One can recognise an ATP-grasp 2 domain in the interval 671–861; the sequence is EAALTQLGIP…MANVATKVIL (191 aa). Residues arginine 707, arginine 746, glutamate 752, glycine 777, valine 778, histidine 779, serine 780, glutamine 820, and glutamate 832 each contribute to the ATP site. Glutamine 820, glutamate 832, and asparagine 834 together coordinate Mg(2+). Mn(2+)-binding residues include glutamine 820, glutamate 832, and asparagine 834. An MGS-like domain is found at 930-1072; sequence INIPTHGSVI…QTKRHEVVHA (143 aa). An allosteric domain region spans residues 930-1072; the sequence is INIPTHGSVI…QTKRHEVVHA (143 aa).

Belongs to the CarB family. Composed of two chains; the small (or glutamine) chain promotes the hydrolysis of glutamine to ammonia, which is used by the large (or ammonia) chain to synthesize carbamoyl phosphate. Tetramer of heterodimers (alpha,beta)4. Requires Mg(2+) as cofactor. Mn(2+) serves as cofactor.

It catalyses the reaction hydrogencarbonate + L-glutamine + 2 ATP + H2O = carbamoyl phosphate + L-glutamate + 2 ADP + phosphate + 2 H(+). The enzyme catalyses hydrogencarbonate + NH4(+) + 2 ATP = carbamoyl phosphate + 2 ADP + phosphate + 2 H(+). It participates in amino-acid biosynthesis; L-arginine biosynthesis; carbamoyl phosphate from bicarbonate: step 1/1. The protein operates within pyrimidine metabolism; UMP biosynthesis via de novo pathway; (S)-dihydroorotate from bicarbonate: step 1/3. Its function is as follows. Large subunit of the glutamine-dependent carbamoyl phosphate synthetase (CPSase). CPSase catalyzes the formation of carbamoyl phosphate from the ammonia moiety of glutamine, carbonate, and phosphate donated by ATP, constituting the first step of 2 biosynthetic pathways, one leading to arginine and/or urea and the other to pyrimidine nucleotides. The large subunit (synthetase) binds the substrates ammonia (free or transferred from glutamine from the small subunit), hydrogencarbonate and ATP and carries out an ATP-coupled ligase reaction, activating hydrogencarbonate by forming carboxy phosphate which reacts with ammonia to form carbamoyl phosphate. This Bacillus cereus (strain G9842) protein is Carbamoyl phosphate synthase large chain.